The primary structure comprises 655 residues: p-hydroxybenzoic acid efflux pump subunit AaeB (655 aa).

The Periplasmic portion of the chain corresponds to 1–12 (MGIFSIANQHIR). The helical transmembrane segment at 13–33 (FAVKLATAIVLALFVGFHFQL) threads the bilayer. The Cytoplasmic portion of the chain corresponds to 34 to 37 (ETPR). The helical transmembrane segment at 38-58 (WAVLTAAIVAAGPAFAAGGEP) threads the bilayer. Topologically, residues 59–68 (YSGAIRYRGF) are periplasmic. The chain crosses the membrane as a helical span at residues 69–89 (LRIIGTFIGCIAGLVIIIAMI). Residues 90 to 92 (RAP) lie on the Cytoplasmic side of the membrane. The chain crosses the membrane as a helical span at residues 93 to 113 (LLMILVCCIWAGFCTWISSLV). Over 114–120 (RIENSYA) the chain is Periplasmic. The helical transmembrane segment at 121–141 (WGLAGYTALIIVITIQPEPLL) threads the bilayer. The Cytoplasmic portion of the chain corresponds to 142–151 (TPQFAVERCS). Residues 152–172 (EIVIGIVCAIMADLLFSPRSI) form a helical membrane-spanning segment. The Periplasmic segment spans residues 173 to 369 (KQEVDRELES…RTTLSCILGT (197 aa)). The helical transmembrane segment at 370–390 (LFWLWTGWTSGSGAMVMIAVV) threads the bilayer. Residues 391–406 (TSLAMRLPNPRMVAID) lie on the Cytoplasmic side of the membrane. Residues 407 to 427 (FIYGTLAALPLGLLYFLVIIP) traverse the membrane as a helical segment. The Periplasmic segment spans residues 428–430 (NTQ). The helical transmembrane segment at 431 to 451 (QSMLLLCISLAVLGFFLGIEV) threads the bilayer. The Cytoplasmic segment spans residues 452 to 458 (QKRRLGS). A helical membrane pass occupies residues 459–479 (MGALASTINIIVLDNPMTFHF). Residues 480 to 481 (SQ) are Periplasmic-facing. The chain crosses the membrane as a helical span at residues 482–502 (FLDSALGQIVGCVLAFTVILL). Over 503 to 655 (VRDKSRDRTG…HKYQHALTDS (153 aa)) the chain is Cytoplasmic.

It belongs to the aromatic acid exporter ArAE (TC 2.A.85) family.

Its subcellular location is the cell inner membrane. Its function is as follows. Forms an efflux pump with AaeA. Could function as a metabolic relief valve, allowing to eliminate certain compounds when they accumulate to high levels in the cell. The sequence is that of p-hydroxybenzoic acid efflux pump subunit AaeB from Shigella flexneri.